Reading from the N-terminus, the 312-residue chain is MTIKRKKVSVIGAGFTGATTAFLLAQKELADVVLVDIPQLENPTKGKALDMLEASPVQGFDANIIGTSDYADTADSDVVVITAGIARKPGMSRDDLVATNSKIMKSITRDIAKHSPNAIIVVLTNPVDAMTYSVFKEAGFPKERVIGQSGVLDTARFRTFIAQELNFSVKDITGFVLGGHGDDMVPLVRYSYAGGIPLETLIPKERLEAIVERTRKGGGEIVGLLGNGSAYYAPAASLVEMTEAILKDQRRVLPAIAYLEGEYGYSDLYLGVPVILGGNGIEKIIELELLADEKEALDRSVESVRNVMKVLV.

NAD(+)-binding positions include 12–17 and Asp-36; that span reads GAGFTG. Substrate is bound by residues Arg-87 and Arg-93. Residues Asn-100 and 123–125 each bind NAD(+); that span reads LTN. Position 125 (Asn-125) interacts with substrate. Phosphoserine is present on Ser-149. Substrate is bound at residue Arg-156. Catalysis depends on His-180, which acts as the Proton acceptor.

It belongs to the LDH/MDH superfamily. MDH type 3 family.

It catalyses the reaction (S)-malate + NAD(+) = oxaloacetate + NADH + H(+). Catalyzes the reversible oxidation of malate to oxaloacetate. In Bacillus cereus (strain ZK / E33L), this protein is Malate dehydrogenase.